Reading from the N-terminus, the 258-residue chain is Sugar fermentation stimulation protein homolog (258 aa).

This sequence belongs to the SfsA family.

The protein is Sugar fermentation stimulation protein homolog of Marinomonas sp. (strain MWYL1).